A 29-amino-acid chain; its full sequence is Trypsin inhibitor 3 (29 aa).

Cystine bridges form between Cys-3-Cys-20, Cys-10-Cys-22, and Cys-16-Cys-28.

It belongs to the protease inhibitor I7 (squash-type serine protease inhibitor) family.

The protein resides in the secreted. Inhibits trypsin. This Luffa aegyptiaca (Sponge gourd) protein is Trypsin inhibitor 3.